Consider the following 183-residue polypeptide: Putative calmodulin-like protein 2 (183 aa).

EF-hand domains lie at 7–42, 43–78, 80–115, and 116–151; these read EQIAEFREAFNLFDKDGDGTITSKELGTVMGSLGQS, PTEAELKKMVEEVDADGSGSIEFEEFLGLLARKLRD, GAEDDIREAFRVFDKDQNGFITPDELRHVMANLGDP, and LSDDELADMLHEADSDGDGQINYNEFLKVMMAKRRQ. 19 residues coordinate Ca(2+): Asp20, Asp22, Asp24, Thr26, Glu31, Asp56, Asp58, Ser60, Ser62, Glu67, Asp93, Asp95, Asn97, Glu104, Asp129, Asp131, Asp133, Gln135, and Glu140. Residues 154–183 are disordered; sequence MEGHGSGGHRSSNSHKKSGCCGPNSSCTIL. Residues Cys173 and Cys174 are each lipidated (S-palmitoyl cysteine). Cysteine methyl ester is present on Cys180. Cys180 carries S-farnesyl cysteine lipidation. The propeptide at 181–183 is removed in mature form; the sequence is TIL.

This sequence belongs to the calmodulin family.

The protein localises to the membrane. Potential calcium sensor. This chain is Putative calmodulin-like protein 2 (CML2), found in Oryza sativa subsp. japonica (Rice).